The following is a 159-amino-acid chain: Ribosomal RNA large subunit methyltransferase H (159 aa).

S-adenosyl-L-methionine-binding positions include leucine 76, glycine 108, and 127-132 (FSKMTF).

Belongs to the RNA methyltransferase RlmH family. In terms of assembly, homodimer.

The protein localises to the cytoplasm. It catalyses the reaction pseudouridine(1915) in 23S rRNA + S-adenosyl-L-methionine = N(3)-methylpseudouridine(1915) in 23S rRNA + S-adenosyl-L-homocysteine + H(+). Its function is as follows. Specifically methylates the pseudouridine at position 1915 (m3Psi1915) in 23S rRNA. The sequence is that of Ribosomal RNA large subunit methyltransferase H from Lachnospira eligens (strain ATCC 27750 / DSM 3376 / VPI C15-48 / C15-B4) (Eubacterium eligens).